The chain runs to 71 residues: Large ribosomal subunit protein bL31 (71 aa).

Positions 16, 18, 38, and 41 each coordinate Zn(2+).

It belongs to the bacterial ribosomal protein bL31 family. Type A subfamily. Part of the 50S ribosomal subunit. It depends on Zn(2+) as a cofactor.

In terms of biological role, binds the 23S rRNA. This is Large ribosomal subunit protein bL31 from Laribacter hongkongensis (strain HLHK9).